We begin with the raw amino-acid sequence, 303 residues long: MEKYEKLEKVGEGTYGKVYKAQDRATGQLVALKKTRLEMDEEGIPPTALREISILRLLSQSLYVVRLLSVEQATKNGKPVLYLVFEFLDTDLKKFVDAYRKGPNPRPLPTNVIKSFLYQLCKGVAHCHGHGVLHRDLKPQNLLVDKEKGILKIADLGLGRAFTVPMKSYTHEIVTLWYRAPEVLLGSTHYSTGVDIWSVGCIFAEMVRRQALFPGDSELQQLLHIFRLLGTPTEEQWPGVTDLRDWHEFPQWKPQILERQVPSLEPEGVDLLSKMLQYNPANRISAKAAMEHPYFDSLDKSQF.

Positions 4-295 (YEKLEKVGEG…AKAAMEHPYF (292 aa)) constitute a Protein kinase domain. Residues 10 to 18 (VGEGTYGKV) and K33 each bind ATP. The residue at position 14 (T14) is a Phosphothreonine. A Phosphotyrosine modification is found at Y15. Residue D136 is the Proton acceptor of the active site. Position 170 is a phosphothreonine (T170).

The protein belongs to the protein kinase superfamily. CMGC Ser/Thr protein kinase family. CDC2/CDKX subfamily. As to expression, expressed in actively dividing cells: root and shoot apical meristems, and young leaves.

The catalysed reaction is L-seryl-[protein] + ATP = O-phospho-L-seryl-[protein] + ADP + H(+). It carries out the reaction L-threonyl-[protein] + ATP = O-phospho-L-threonyl-[protein] + ADP + H(+). The enzyme catalyses [DNA-directed RNA polymerase] + ATP = phospho-[DNA-directed RNA polymerase] + ADP + H(+). The polypeptide is Cyclin-dependent kinase B1-1 (CDKB1-1) (Oryza sativa subsp. japonica (Rice)).